A 339-amino-acid chain; its full sequence is Dihydroorotate dehydrogenase (quinone) (339 aa).

FMN is bound by residues 64 to 68 (AGADK) and Thr88. Lys68 is a binding site for substrate. 113 to 117 (NRNGF) is a substrate binding site. Residues Asn141 and Asn174 each contribute to the FMN site. Asn174 provides a ligand contact to substrate. The active-site Nucleophile is Ser177. Asn179 contributes to the substrate binding site. 2 residues coordinate FMN: Lys219 and Thr247. A substrate-binding site is contributed by 248 to 249 (NT). FMN contacts are provided by residues Gly270, Gly299, and 320–321 (YS).

It belongs to the dihydroorotate dehydrogenase family. Type 2 subfamily. As to quaternary structure, monomer. FMN serves as cofactor.

Its subcellular location is the cell membrane. The catalysed reaction is (S)-dihydroorotate + a quinone = orotate + a quinol. The protein operates within pyrimidine metabolism; UMP biosynthesis via de novo pathway; orotate from (S)-dihydroorotate (quinone route): step 1/1. Functionally, catalyzes the conversion of dihydroorotate to orotate with quinone as electron acceptor. This is Dihydroorotate dehydrogenase (quinone) from Haemophilus influenzae (strain 86-028NP).